The following is a 546-amino-acid chain: CTP synthase (546 aa).

The amidoligase domain stretch occupies residues 1-266 (MTTNYIFVTG…DELVCKRFGI (266 aa)). CTP is bound at residue serine 14. Serine 14 serves as a coordination point for UTP. ATP contacts are provided by residues 15 to 20 (SLGKGI) and aspartate 72. 2 residues coordinate Mg(2+): aspartate 72 and glutamate 140. CTP is bound by residues 147–149 (DIE), 187–192 (KTKPTQ), and lysine 223. UTP is bound by residues 187 to 192 (KTKPTQ) and lysine 223. 239 to 241 (RDV) serves as a coordination point for ATP. The Glutamine amidotransferase type-1 domain maps to 291-542 (TIGMVGKYIE…VKAAGEFQRG (252 aa)). Glycine 352 contributes to the L-glutamine binding site. Cysteine 379 functions as the Nucleophile; for glutamine hydrolysis in the catalytic mechanism. Residues 380 to 383 (LGMQ), glutamate 403, and arginine 470 contribute to the L-glutamine site. Residues histidine 515 and glutamate 517 contribute to the active site.

Belongs to the CTP synthase family. In terms of assembly, homotetramer.

It carries out the reaction UTP + L-glutamine + ATP + H2O = CTP + L-glutamate + ADP + phosphate + 2 H(+). The enzyme catalyses L-glutamine + H2O = L-glutamate + NH4(+). The catalysed reaction is UTP + NH4(+) + ATP = CTP + ADP + phosphate + 2 H(+). It participates in pyrimidine metabolism; CTP biosynthesis via de novo pathway; CTP from UDP: step 2/2. Allosterically activated by GTP, when glutamine is the substrate; GTP has no effect on the reaction when ammonia is the substrate. The allosteric effector GTP functions by stabilizing the protein conformation that binds the tetrahedral intermediate(s) formed during glutamine hydrolysis. Inhibited by the product CTP, via allosteric rather than competitive inhibition. In terms of biological role, catalyzes the ATP-dependent amination of UTP to CTP with either L-glutamine or ammonia as the source of nitrogen. Regulates intracellular CTP levels through interactions with the four ribonucleotide triphosphates. This Vibrio atlanticus (strain LGP32) (Vibrio splendidus (strain Mel32)) protein is CTP synthase.